Reading from the N-terminus, the 338-residue chain is DNA-directed RNA polymerase subunit alpha (338 aa).

Residues Met1–Asn225 are alpha N-terminal domain (alpha-NTD). Residues Tyr242–Glu338 are alpha C-terminal domain (alpha-CTD). The segment at Phe314–Glu338 is disordered.

It belongs to the RNA polymerase alpha chain family. Homodimer. The RNAP catalytic core consists of 2 alpha, 1 beta, 1 beta' and 1 omega subunit. When a sigma factor is associated with the core the holoenzyme is formed, which can initiate transcription.

The enzyme catalyses RNA(n) + a ribonucleoside 5'-triphosphate = RNA(n+1) + diphosphate. Functionally, DNA-dependent RNA polymerase catalyzes the transcription of DNA into RNA using the four ribonucleoside triphosphates as substrates. In Corynebacterium efficiens (strain DSM 44549 / YS-314 / AJ 12310 / JCM 11189 / NBRC 100395), this protein is DNA-directed RNA polymerase subunit alpha.